Consider the following 185-residue polypeptide: Ribosome-recycling factor (185 aa).

Belongs to the RRF family.

Its subcellular location is the cytoplasm. Responsible for the release of ribosomes from messenger RNA at the termination of protein biosynthesis. May increase the efficiency of translation by recycling ribosomes from one round of translation to another. This Streptococcus sanguinis (strain SK36) protein is Ribosome-recycling factor.